We begin with the raw amino-acid sequence, 485 residues long: D-alanine--D-alanyl carrier protein ligase (485 aa).

144–145 (TS) is an ATP binding site. D189 is a binding site for D-alanine. Residue 284 to 289 (NTYGPT) participates in ATP binding. V293 provides a ligand contact to D-alanine. ATP-binding residues include D365 and K473. K473 provides a ligand contact to D-alanine.

The protein belongs to the ATP-dependent AMP-binding enzyme family. DltA subfamily.

It is found in the cytoplasm. It catalyses the reaction holo-[D-alanyl-carrier protein] + D-alanine + ATP = D-alanyl-[D-alanyl-carrier protein] + AMP + diphosphate. It functions in the pathway cell wall biogenesis; lipoteichoic acid biosynthesis. Catalyzes the first step in the D-alanylation of lipoteichoic acid (LTA), the activation of D-alanine and its transfer onto the D-alanyl carrier protein (Dcp) DltC. In an ATP-dependent two-step reaction, forms a high energy D-alanyl-AMP intermediate, followed by transfer of the D-alanyl residue as a thiol ester to the phosphopantheinyl prosthetic group of the Dcp. D-alanylation of LTA plays an important role in modulating the properties of the cell wall in Gram-positive bacteria, influencing the net charge of the cell wall. In Staphylococcus aureus (strain Mu3 / ATCC 700698), this protein is D-alanine--D-alanyl carrier protein ligase.